The sequence spans 235 residues: Proteasome subunit beta type-1 (235 aa).

Positions 1 to 20 (MSRLGFEQFPDYQVPGMKHP) are excised as a propeptide.

The protein belongs to the peptidase T1B family. In terms of assembly, the 26S proteasome consists of a 20S proteasome core and two 19S regulatory subunits. The 20S proteasome core is composed of 28 subunits that are arranged in four stacked rings, resulting in a barrel-shaped structure. The two end rings are each formed by seven alpha subunits, and the two central rings are each formed by seven beta subunits. The catalytic chamber with the active sites is on the inside of the barrel.

It localises to the cytoplasm. The protein resides in the nucleus. Functionally, non-catalytic component of the proteasome, a multicatalytic proteinase complex which is characterized by its ability to cleave peptides with Arg, Phe, Tyr, Leu, and Glu adjacent to the leaving group at neutral or slightly basic pH. The proteasome has an ATP-dependent proteolytic activity. The sequence is that of Proteasome subunit beta type-1 (Prosbeta6) from Drosophila melanogaster (Fruit fly).